A 209-amino-acid polypeptide reads, in one-letter code: Large ribosomal subunit protein uL3 (209 aa).

The disordered stretch occupies residues 125–148; sequence RHGQSRGPMAHGSRYHRRPGSMGP.

The protein belongs to the universal ribosomal protein uL3 family. In terms of assembly, part of the 50S ribosomal subunit. Forms a cluster with proteins L14 and L19.

Functionally, one of the primary rRNA binding proteins, it binds directly near the 3'-end of the 23S rRNA, where it nucleates assembly of the 50S subunit. This is Large ribosomal subunit protein uL3 from Lysinibacillus sphaericus (strain C3-41).